A 567-amino-acid polypeptide reads, in one-letter code: Urease subunit alpha (567 aa).

Positions 128–567 (GGIDPHIHFI…LPLAQLYHLF (440 aa)) constitute a Urease domain. Residues H133, H135, and K216 each coordinate Ni(2+). N6-carboxylysine is present on K216. H218 lines the substrate pocket. Residues H245 and H271 each contribute to the Ni(2+) site. H319 functions as the Proton donor in the catalytic mechanism. A Ni(2+)-binding site is contributed by D359.

The protein belongs to the metallo-dependent hydrolases superfamily. Urease alpha subunit family. In terms of assembly, heterotrimer of UreA (gamma), UreB (beta) and UreC (alpha) subunits. Three heterotrimers associate to form the active enzyme. Ni cation is required as a cofactor. In terms of processing, carboxylation allows a single lysine to coordinate two nickel ions.

The protein localises to the cytoplasm. It carries out the reaction urea + 2 H2O + H(+) = hydrogencarbonate + 2 NH4(+). The protein operates within nitrogen metabolism; urea degradation; CO(2) and NH(3) from urea (urease route): step 1/1. This Marinobacter nauticus (strain ATCC 700491 / DSM 11845 / VT8) (Marinobacter aquaeolei) protein is Urease subunit alpha.